Consider the following 167-residue polypeptide: Putative peroxiredoxin-B (167 aa).

In terms of domain architecture, Thioredoxin spans 4–167 (IKRGDRFPTT…STAQKIIAKL (164 aa)). Residue Cys53 is the Cysteine sulfenic acid (-SOH) intermediate of the active site. The Microbody targeting signal motif lies at 165–167 (AKL).

Belongs to the peroxiredoxin family. Prx5 subfamily.

The protein resides in the peroxisome membrane. It catalyses the reaction a hydroperoxide + [thioredoxin]-dithiol = an alcohol + [thioredoxin]-disulfide + H2O. Thiol-specific peroxidase that catalyzes the reduction of hydrogen peroxide and organic hydroperoxides to water and alcohols, respectively. Plays a role in cell protection against oxidative stress by detoxifying peroxides and as sensor of hydrogen peroxide-mediated signaling events. The chain is Putative peroxiredoxin-B (PMPB) from Candida boidinii (Yeast).